The chain runs to 145 residues: Bacilliredoxin SAR1592 (145 aa).

It belongs to the bacilliredoxin family.

This is Bacilliredoxin SAR1592 from Staphylococcus aureus (strain MRSA252).